We begin with the raw amino-acid sequence, 576 residues long: Sulfite reductase [NADPH] hemoprotein beta-component (576 aa).

[4Fe-4S] cluster-binding residues include C435, C441, C480, and C484. C484 contributes to the siroheme binding site.

It belongs to the nitrite and sulfite reductase 4Fe-4S domain family. In terms of assembly, alpha(8)-beta(8). The alpha component is a flavoprotein, the beta component is a hemoprotein. The cofactor is siroheme. [4Fe-4S] cluster is required as a cofactor.

The enzyme catalyses hydrogen sulfide + 3 NADP(+) + 3 H2O = sulfite + 3 NADPH + 4 H(+). It participates in sulfur metabolism; hydrogen sulfide biosynthesis; hydrogen sulfide from sulfite (NADPH route): step 1/1. Its function is as follows. Component of the sulfite reductase complex that catalyzes the 6-electron reduction of sulfite to sulfide. This is one of several activities required for the biosynthesis of L-cysteine from sulfate. The sequence is that of Sulfite reductase [NADPH] hemoprotein beta-component from Proteus mirabilis (strain HI4320).